The sequence spans 129 residues: Fluoride-specific ion channel FluC (129 aa).

The next 4 helical transmembrane spans lie at 6–26 (ILAI…FNGI), 35–55 (IPFG…ILIA), 73–93 (TGVL…FLLL), and 98–118 (IALA…MAGG). Gly77 and Thr80 together coordinate Na(+).

It belongs to the fluoride channel Fluc/FEX (TC 1.A.43) family.

It localises to the cell inner membrane. The enzyme catalyses fluoride(in) = fluoride(out). Its activity is regulated as follows. Na(+) is not transported, but it plays an essential structural role and its presence is essential for fluoride channel function. Functionally, fluoride-specific ion channel. Important for reducing fluoride concentration in the cell, thus reducing its toxicity. In Sulfurimonas denitrificans (strain ATCC 33889 / DSM 1251) (Thiomicrospira denitrificans (strain ATCC 33889 / DSM 1251)), this protein is Fluoride-specific ion channel FluC.